A 419-amino-acid polypeptide reads, in one-letter code: Transcription termination factor Rho (419 aa).

The 76-residue stretch at 48–123 (EISGDGVLEI…LKVDTINFDR (76 aa)) folds into the Rho RNA-BD domain. 3 RNA-binding regions span residues 61–66 (GFGFLR), 78–80 (DIY), and 108–110 (ERY). ATP-binding positions include 169–174 (GKGQRG), 181–186 (KAGKTI), and Arg212. The RNA-binding 2 stretch occupies residues 284-288 (VLTGG).

It belongs to the Rho family. Homohexamer. The homohexamer assembles into an open ring structure.

Functionally, facilitates transcription termination by a mechanism that involves Rho binding to the nascent RNA, activation of Rho's RNA-dependent ATPase activity, and release of the mRNA from the DNA template. In Pseudomonas fluorescens biotype C, this protein is Transcription termination factor Rho.